A 159-amino-acid polypeptide reads, in one-letter code: Kojic acid related protein 6 (159 aa).

Negatively regulates mycelium growth and conidial formation and is required for stress tolerance. Plays a role in kojic acid synthesis in coordination with kojA, kojR and kojT where it acts upstream of kojA. This Aspergillus oryzae (strain ATCC 42149 / RIB 40) (Yellow koji mold) protein is Kojic acid related protein 6.